The sequence spans 360 residues: F-box protein SKP2A (360 aa).

One can recognise an F-box domain in the interval 25 to 71; the sequence is IKEWKDIPVELLMRILSLVDDRNVIVASGVCTGWRDAISFGLTRLRL. (indol-3-yl)acetate-binding positions include 127 to 128, 149 to 152, 175 to 178, and Asn-202; these read SL, NLSG, and NLCG.

In terms of assembly, part of a SCF (ASK-cullin-F-box) protein ligase complex. Interacts with CUL1 (RUB1-modified and non-modified isoforms), SKP1A, SKP1B and ASK18. Recruit DPB and phosphorylated E2FC. Interacts with auxin. Auxin controls the interaction with DPB. Polyubiquitinated and subsequently targeted to proteasome. Auxin promotes this ubiquitination-mediated degradation. In terms of tissue distribution, expressed in embryo, seedlings, hypocotyl, roots, leaves and flowers.

It is found in the nucleus. It participates in protein modification; protein ubiquitination. In terms of biological role, component of SCF(SKP2A) E3 ubiquitin ligase complexes, which mediate the ubiquitination and subsequent proteasomal degradation of target proteins (including cell cycle repressors). Acts as an auxin receptor; one active auxin is indole-3-acetate. Regulates the stability of the transcription factors E2FC and DPB, repressors of cell proliferation. Confers increase tolerance to osmotic stress by promoting cell division, especially in meristems. Promotes the formation of lateral root primordia. This chain is F-box protein SKP2A (SKP2A), found in Arabidopsis thaliana (Mouse-ear cress).